The primary structure comprises 653 residues: Eukaryotic translation initiation factor 4E-binding protein Mextli (653 aa).

Positions 227 to 292 constitute a KH domain; that stretch reads YCKDEVVIRN…DKINYAKQLM (66 aa). 2 disordered regions span residues 311-335 and 515-570; these read VGGS…TPTG and EGDD…AGTN. Low complexity-rich tracts occupy residues 314-323 and 525-536; these read SCSSLNSSNS and SNGGSSTSNQNG. The span at 546–563 shows a compositional bias: basic and acidic residues; sequence SRKESTPETKGAREKGDL.

As to quaternary structure, interacts with eukaryotic translation initiation factor eIF4E1. Also interacts with eukaryotic translation initiation factor 3 complex members eif3-S9/eif3b, Int6/eif3e and eIF-3p40/eif3h and with CG3225.

It is found in the cytoplasm. The protein localises to the cytoplasmic ribonucleoprotein granule. Plays a role in promoting translation. The sequence is that of Eukaryotic translation initiation factor 4E-binding protein Mextli from Drosophila melanogaster (Fruit fly).